Consider the following 456-residue polypeptide: Probable tRNA(Ile)-lysidine synthase (456 aa).

An ATP-binding site is contributed by 30-35; sequence SGGVDS.

Belongs to the tRNA(Ile)-lysidine synthase family.

Its subcellular location is the cytoplasm. It catalyses the reaction cytidine(34) in tRNA(Ile2) + L-lysine + ATP = lysidine(34) in tRNA(Ile2) + AMP + diphosphate + H(+). Its function is as follows. Ligates lysine onto the cytidine present at position 34 of the AUA codon-specific tRNA(Ile) that contains the anticodon CAU, in an ATP-dependent manner. Cytidine is converted to lysidine, thus changing the amino acid specificity of the tRNA from methionine to isoleucine. The chain is Probable tRNA(Ile)-lysidine synthase from Schizosaccharomyces pombe (strain 972 / ATCC 24843) (Fission yeast).